Consider the following 277-residue polypeptide: Digeranylgeranylglyceryl phosphate synthase (277 aa).

7 helical membrane passes run 13 to 33 (PGNA…AGGL), 40 to 60 (AFAV…NDYF), 89 to 109 (VALF…AIAI), 143 to 163 (FLYG…LFAL), 199 to 219 (RSLY…PLPY), 220 to 240 (LLGL…CGLA), and 256 to 276 (WLKA…LAVV).

The protein belongs to the UbiA prenyltransferase family. DGGGP synthase subfamily. Requires Mg(2+) as cofactor.

The protein resides in the cell membrane. The catalysed reaction is sn-3-O-(geranylgeranyl)glycerol 1-phosphate + (2E,6E,10E)-geranylgeranyl diphosphate = 2,3-bis-O-(geranylgeranyl)-sn-glycerol 1-phosphate + diphosphate. The protein operates within membrane lipid metabolism; glycerophospholipid metabolism. Its function is as follows. Prenyltransferase that catalyzes the transfer of the geranylgeranyl moiety of geranylgeranyl diphosphate (GGPP) to the C2 hydroxyl of (S)-3-O-geranylgeranylglyceryl phosphate (GGGP). This reaction is the second ether-bond-formation step in the biosynthesis of archaeal membrane lipids. The polypeptide is Digeranylgeranylglyceryl phosphate synthase (Natronomonas pharaonis (strain ATCC 35678 / DSM 2160 / CIP 103997 / JCM 8858 / NBRC 14720 / NCIMB 2260 / Gabara) (Halobacterium pharaonis)).